Consider the following 264-residue polypeptide: H-2 class II histocompatibility antigen, I-A beta chain (264 aa).

Positions 1–31 (MVWLPRVPCVAAVILLLTVLSPPVALVRDSR) are cleaved as a signal peptide. The tract at residues 32-121 (PWFLEYCKSE…IFDNFLVPRR (90 aa)) is beta-1. Residues 32 to 225 (PWFLEYCKSE…KAQSTSAQNK (194 aa)) are Extracellular-facing. 2 cysteine pairs are disulfide-bonded: Cys42–Cys106 and Cys144–Cys200. Asn46 carries an N-linked (GlcNAc...) asparagine glycan. The interval 122-215 (VEPTVTVYPT…SLTDPVTVEW (94 aa)) is beta-2. The region spanning 124–214 (PTVTVYPTKT…PSLTDPVTVE (91 aa)) is the Ig-like C1-type domain. The segment at 216-225 (KAQSTSAQNK) is connecting peptide. Residues 226-248 (MLSGVGGFVLGLLFLRAGLFIYF) traverse the membrane as a helical segment. Residues 249–264 (RNQKGQSGLQPTGLLS) are Cytoplasmic-facing.

The protein belongs to the MHC class II family. Ubiquitinated in immature dendritic cells leading to down-regulation of MHC class II.

It is found in the membrane. This Mus musculus (Mouse) protein is H-2 class II histocompatibility antigen, I-A beta chain (H2-Eb1).